The sequence spans 291 residues: Formamidopyrimidine-DNA glycosylase (291 aa).

The active-site Schiff-base intermediate with DNA is the P2. Residue E3 is the Proton donor of the active site. K58 acts as the Proton donor; for beta-elimination activity in catalysis. DNA is bound by residues H100, R123, and K166. The FPG-type zinc-finger motif lies at 257–291 (SVYGREGKECLQCGTPIIRILQSGRSSFYCSQCQK). The Proton donor; for delta-elimination activity role is filled by R281.

The protein belongs to the FPG family. Monomer. Zn(2+) is required as a cofactor.

It catalyses the reaction Hydrolysis of DNA containing ring-opened 7-methylguanine residues, releasing 2,6-diamino-4-hydroxy-5-(N-methyl)formamidopyrimidine.. It carries out the reaction 2'-deoxyribonucleotide-(2'-deoxyribose 5'-phosphate)-2'-deoxyribonucleotide-DNA = a 3'-end 2'-deoxyribonucleotide-(2,3-dehydro-2,3-deoxyribose 5'-phosphate)-DNA + a 5'-end 5'-phospho-2'-deoxyribonucleoside-DNA + H(+). Its function is as follows. Involved in base excision repair of DNA damaged by oxidation or by mutagenic agents. Acts as a DNA glycosylase that recognizes and removes damaged bases. Has a preference for oxidized purines, such as 7,8-dihydro-8-oxoguanine (8-oxoG). Has AP (apurinic/apyrimidinic) lyase activity and introduces nicks in the DNA strand. Cleaves the DNA backbone by beta-delta elimination to generate a single-strand break at the site of the removed base with both 3'- and 5'-phosphates. This Bartonella tribocorum (strain CIP 105476 / IBS 506) protein is Formamidopyrimidine-DNA glycosylase.